Reading from the N-terminus, the 412-residue chain is Multifunctional CCA protein (412 aa).

Positions 8 and 11 each coordinate ATP. Gly-8 and Arg-11 together coordinate CTP. Residues Asp-21 and Asp-23 each coordinate Mg(2+). The ATP site is built by Arg-91, Arg-137, and Arg-140. CTP is bound by residues Arg-91, Arg-137, and Arg-140. One can recognise an HD domain in the interval 228–329 (TGIHTLMTLS…VKLFDSIDAW (102 aa)).

The protein belongs to the tRNA nucleotidyltransferase/poly(A) polymerase family. Bacterial CCA-adding enzyme type 1 subfamily. As to quaternary structure, monomer. Can also form homodimers and oligomers. Requires Mg(2+) as cofactor. It depends on Ni(2+) as a cofactor.

The enzyme catalyses a tRNA precursor + 2 CTP + ATP = a tRNA with a 3' CCA end + 3 diphosphate. It catalyses the reaction a tRNA with a 3' CCA end + 2 CTP + ATP = a tRNA with a 3' CCACCA end + 3 diphosphate. In terms of biological role, catalyzes the addition and repair of the essential 3'-terminal CCA sequence in tRNAs without using a nucleic acid template. Adds these three nucleotides in the order of C, C, and A to the tRNA nucleotide-73, using CTP and ATP as substrates and producing inorganic pyrophosphate. tRNA 3'-terminal CCA addition is required both for tRNA processing and repair. Also involved in tRNA surveillance by mediating tandem CCA addition to generate a CCACCA at the 3' terminus of unstable tRNAs. While stable tRNAs receive only 3'-terminal CCA, unstable tRNAs are marked with CCACCA and rapidly degraded. The protein is Multifunctional CCA protein of Escherichia coli O81 (strain ED1a).